The sequence spans 244 residues: PF03932 family protein CutC (244 aa).

This sequence belongs to the CutC family.

It localises to the cytoplasm. In Pasteurella multocida (strain Pm70), this protein is PF03932 family protein CutC.